The chain runs to 313 residues: Pyrimidine-specific ribonucleoside hydrolase RihB (313 aa).

Asp-11 serves as the catalytic Proton acceptor. The Ca(2+) site is built by Asp-11, Asp-16, and Val-124. The substrate site is built by Gln-227 and His-239. Residue Asp-240 participates in Ca(2+) binding.

The protein belongs to the IUNH family. RihB subfamily. In terms of assembly, homotetramer. Ca(2+) serves as cofactor.

It carries out the reaction a pyrimidine ribonucleoside + H2O = a pyrimidine nucleobase + D-ribose. Functionally, hydrolyzes cytidine or uridine to ribose and cytosine or uracil, respectively. Has a clear preference for cytidine over uridine. Strictly specific for ribonucleosides. In Escherichia coli O17:K52:H18 (strain UMN026 / ExPEC), this protein is Pyrimidine-specific ribonucleoside hydrolase RihB.